The sequence spans 209 residues: N-(5'-phosphoribosyl)anthranilate isomerase (209 aa).

It belongs to the TrpF family.

The enzyme catalyses N-(5-phospho-beta-D-ribosyl)anthranilate = 1-(2-carboxyphenylamino)-1-deoxy-D-ribulose 5-phosphate. The protein operates within amino-acid biosynthesis; L-tryptophan biosynthesis; L-tryptophan from chorismate: step 3/5. The polypeptide is N-(5'-phosphoribosyl)anthranilate isomerase (Granulibacter bethesdensis (strain ATCC BAA-1260 / CGDNIH1)).